A 416-amino-acid chain; its full sequence is Keratin, type I cuticular Ha1 (416 aa).

The head stretch occupies residues 1–56 (MPYNFCLPSLSCRTSCSSRPCVPPSCHSCTLPGACNIPANVSNCNWFCEGSFNGSE). The 312-residue stretch at 56–367 (EKETMQFLND…SLLESEDCNL (312 aa)) folds into the IF rod domain. The coil 1A stretch occupies residues 57 to 91 (KETMQFLNDRLASYLEKVRQLERDNAELENLIRER). The linker 1 stretch occupies residues 92–102 (SQQQEPLLCPS). The segment at 103–203 (YQSYFKTIEE…HEQEVNTLRC (101 aa)) is coil 1B. The interval 204–219 (QLGDRLNVEVDAAPTV) is linker 12. The coil 2 stretch occupies residues 220-363 (DLNRVLNETR…NTYRSLLESE (144 aa)). Residues 364-416 (DCNLPSNPCATTNACSKPIGPCLSNPCTPCVPPAPCTPCAPRPRCGPCNSFVR) form a tail region.

It belongs to the intermediate filament family.

The polypeptide is Keratin, type I cuticular Ha1 (KRT31) (Pan troglodytes (Chimpanzee)).